A 470-amino-acid polypeptide reads, in one-letter code: SHUGOSHIN 2 (470 aa).

Residues 72 to 113 (IQKLRINLRSVQEKNLQLAQANSQMLAELNTNRDRLKDLQHE) adopt a coiled-coil conformation. Basic and acidic residues-rich tracts occupy residues 131 to 143 (VLPR…KDKV) and 150 to 162 (GDCK…DIKH). Disordered regions lie at residues 131–176 (VLPR…IKSS) and 358–470 (ESAG…RRKC). The span at 163 to 172 (KDTKRKRTTR) shows a compositional bias: basic residues. Residues 370–381 (SESRHETKEITR) are compositionally biased toward basic and acidic residues. The segment covering 382 to 392 (KRSFSTRRQST) has biased composition (basic residues). Basic and acidic residues-rich tracts occupy residues 396 to 406 (SQTDEAIKEIA), 423 to 438 (TESK…EGMT), and 449 to 462 (HAAE…EVSL).

This sequence belongs to the shugoshin family.

Its function is as follows. Dispensable for both meiotic and mitotic cell cycle progression. Required with SGO1 for full protection of centromeric cohesion during anaphase I. Required to prevent precocious release of pericentromeric cohesins during meiosis. Acts redundantly to SGO1. The sequence is that of SHUGOSHIN 2 from Arabidopsis thaliana (Mouse-ear cress).